Reading from the N-terminus, the 100-residue chain is Small ribosomal subunit protein uS14c (100 aa).

It belongs to the universal ribosomal protein uS14 family. In terms of assembly, part of the 30S ribosomal subunit.

The protein localises to the plastid. It localises to the chloroplast. In terms of biological role, binds 16S rRNA, required for the assembly of 30S particles. This Chaetosphaeridium globosum (Charophycean green alga) protein is Small ribosomal subunit protein uS14c.